The chain runs to 96 residues: Protein Vpr (96 aa).

The interval Met-1–Leu-42 is homooligomerization. Ser-79, Ser-94, and Ser-96 each carry phosphoserine; by host.

Belongs to the HIV-1 VPR protein family. Homooligomer, may form homodimer. Interacts with p6-gag region of the Pr55 Gag precursor protein through a (Leu-X-X)4 motif near the C-terminus of the P6gag protein. Interacts with host UNG. May interact with host RAD23A/HHR23A. Interacts with host VPRBP/DCAF1, leading to hijack the CUL4A-RBX1-DDB1-DCAF1/VPRBP complex, mediating ubiquitination of host proteins such as TERT and ZGPAT and arrest of the cell cycle in G2 phase. In terms of processing, phosphorylated on several residues by host. These phosphorylations regulate VPR activity for the nuclear import of the HIV-1 pre-integration complex.

The protein localises to the virion. It localises to the host nucleus. The protein resides in the host extracellular space. During virus replication, may deplete host UNG protein, and incude G2-M cell cycle arrest. Acts by targeting specific host proteins for degradation by the 26S proteasome, through association with the cellular CUL4A-DDB1 E3 ligase complex by direct interaction with host VPRPB/DCAF-1. Cell cycle arrest reportedly occurs within hours of infection and is not blocked by antiviral agents, suggesting that it is initiated by the VPR carried into the virion. Additionally, VPR induces apoptosis in a cell cycle dependent manner suggesting that these two effects are mechanistically linked. Detected in the serum and cerebrospinal fluid of AIDS patient, VPR may also induce cell death to bystander cells. In terms of biological role, during virus entry, plays a role in the transport of the viral pre-integration (PIC) complex to the host nucleus. This function is crucial for viral infection of non-dividing macrophages. May act directly at the nuclear pore complex, by binding nucleoporins phenylalanine-glycine (FG)-repeat regions. The sequence is that of Protein Vpr from Human immunodeficiency virus type 1 group M subtype F1 (isolate VI850) (HIV-1).